The chain runs to 257 residues: MKKAFILSAAAAVGLFTFGGVQQASAKELSCQPVVTVKTGNTVQNMSLNDAVKKLHINTNIKTLNAANEKEMKQLLQKHAKQSNVKVQDVQKTETAKPAQKTTEKAAADQNTASKAPATAEKTNTTTSAPSSVSAYEKKVVELTNAERQKQGLKPLQIDETLSKSARAKSQDMKDKNYFDHQSPTYGSPFDMMKSFGISYKTAGENIAKGQKTPEEVVKAWMNSEGHRKNILNPNFTHIGVGYVESGSIWTQQFIGK.

A signal peptide spans 1–26 (MKKAFILSAAAAVGLFTFGGVQQASA). A disordered region spans residues 80–135 (AKQSNVKVQDVQKTETAKPAQKTTEKAAADQNTASKAPATAEKTNTTTSAPSSVSA). Residues 121–134 (EKTNTTTSAPSSVS) are compositionally biased toward polar residues. One can recognise an SCP domain in the interval 141–254 (VELTNAERQK…ESGSIWTQQF (114 aa)).

This is an uncharacterized protein from Bacillus subtilis (strain 168).